The following is a 329-amino-acid chain: ATP-dependent (S)-NAD(P)H-hydrate dehydratase (329 aa).

Residues 35 to 326 enclose the YjeF C-terminal domain; the sequence is TLQLVRNIIP…AEVGAAFSKL (292 aa). Residue Tyr-67 is modified to Phosphotyrosine. (6S)-NADPHX contacts are provided by residues Gly-135 and 188–194; that span reads NHMEFSR. Asn-207 and Asn-222 each carry an N-linked (GlcNAc...) asparagine glycan. Residues 228-232 and 247-256 each bind ATP; these read KGERD and GSSRRCGGQG. Asp-257 is a binding site for (6S)-NADPHX. The N-linked (GlcNAc...) asparagine glycan is linked to Asn-279.

The protein belongs to the NnrD/CARKD family. Requires Mg(2+) as cofactor.

The protein resides in the mitochondrion. The catalysed reaction is (6S)-NADHX + ATP = ADP + phosphate + NADH + H(+). It carries out the reaction (6S)-NADPHX + ATP = ADP + phosphate + NADPH + H(+). Catalyzes the dehydration of the S-form of NAD(P)HX at the expense of ATP, which is converted to ADP. Together with NAD(P)HX epimerase, which catalyzes the epimerization of the S- and R-forms, the enzyme allows the repair of both epimers of NAD(P)HX, a damaged form of NAD(P)H that is a result of enzymatic or heat-dependent hydration. The polypeptide is ATP-dependent (S)-NAD(P)H-hydrate dehydratase (Pongo abelii (Sumatran orangutan)).